Reading from the N-terminus, the 50-residue chain is AAPSKATVGESGIITPGGRLIQLPHGVSIILEGPSAALLSNGDFVTYESS.

A run of 2 repeats spans residues 6–23 (ATVG…LIQL) and 30–47 (ILEG…FVTY).

As to expression, calcified shell.

This is Cuticle protein CP498 from Cancer pagurus (Rock crab).